A 257-amino-acid polypeptide reads, in one-letter code: Cytochrome c oxidase subunit 3 (257 aa).

6 consecutive transmembrane segments (helical) span residues proline 13–phenylalanine 33, leucine 36–tryptophan 56, glycine 80–phenylalanine 100, tyrosine 154–phenylalanine 174, phenylalanine 195–valine 215, and alanine 237–tryptophan 257.

This sequence belongs to the cytochrome c oxidase subunit 3 family. As to quaternary structure, component of the cytochrome c oxidase (complex IV, CIV), a multisubunit enzyme composed of a catalytic core of 3 subunits and several supernumerary subunits. The complex exists as a monomer or a dimer and forms supercomplexes (SCs) in the inner mitochondrial membrane with ubiquinol-cytochrome c oxidoreductase (cytochrome b-c1 complex, complex III, CIII).

The protein resides in the mitochondrion inner membrane. The catalysed reaction is 4 Fe(II)-[cytochrome c] + O2 + 8 H(+)(in) = 4 Fe(III)-[cytochrome c] + 2 H2O + 4 H(+)(out). Functionally, component of the cytochrome c oxidase, the last enzyme in the mitochondrial electron transport chain which drives oxidative phosphorylation. The respiratory chain contains 3 multisubunit complexes succinate dehydrogenase (complex II, CII), ubiquinol-cytochrome c oxidoreductase (cytochrome b-c1 complex, complex III, CIII) and cytochrome c oxidase (complex IV, CIV), that cooperate to transfer electrons derived from NADH and succinate to molecular oxygen, creating an electrochemical gradient over the inner membrane that drives transmembrane transport and the ATP synthase. Cytochrome c oxidase is the component of the respiratory chain that catalyzes the reduction of oxygen to water. Electrons originating from reduced cytochrome c in the intermembrane space (IMS) are transferred via the dinuclear copper A center (CU(A)) of subunit 2 and heme A of subunit 1 to the active site in subunit 1, a binuclear center (BNC) formed by heme A3 and copper B (CU(B)). The BNC reduces molecular oxygen to 2 water molecules using 4 electrons from cytochrome c in the IMS and 4 protons from the mitochondrial matrix. The polypeptide is Cytochrome c oxidase subunit 3 (COIII) (Rhipicephalus sanguineus (Brown dog tick)).